The chain runs to 417 residues: Dibenzothiophene monooxygenase (417 aa).

The segment at 18 to 124 (NDPVAVARGL…HLYTQIAQNN (107 aa)) is helical N-terminus. Residues Y96, 129–134 (NASSEN), 159–163 (KHFCS), R282, 369–370 (AR), and H391 contribute to the FMN site. The central beta-barrel N-terminus stretch occupies residues 125 to 233 (WWTGNASSEN…KVEPDEVLGA (109 aa)). The segment at 131-142 (SSENNSHVLDWK) is lid loop. The segment at 234-417 (PNAFVLAFIQ…GQYPIPGFTS (184 aa)) is helical C-terminus.

Belongs to the DszC flavin monooxygenase family. As to quaternary structure, homotetramer formed by a dimer of dimers; FMN binds between monomers of the homodimer.

It localises to the cytoplasm. It carries out the reaction dibenzothiophene + 2 FMNH2 + 2 O2 = dibenzothiophene 5,5-dioxide + 2 FMN + 2 H2O + 2 H(+). It catalyses the reaction dibenzothiophene + FMNH2 + O2 = dibenzothiophene 5-oxide + FMN + H2O + H(+). The catalysed reaction is dibenzothiophene 5-oxide + FMNH2 + O2 = dibenzothiophene 5,5-dioxide + FMN + H2O + H(+). It functions in the pathway sulfur metabolism; dibenzothiophene degradation. DBT degradation completely inhibited by Cu(2+), Mn(2+), p-chloromercuribenzoic acid, 2,2-bipyridyl, 1,10-phenanthroline, and strongly inhibited by Zn(2+), 5,5'- Dithiobis(2-nitrobenzoic acid) and 8-quinolinol. In terms of biological role, catalyzes the first step of the '4S' desulfurization pathway that removes covalently bound sulfur from dibenzothiophene (DBT) without breaking carbon-carbon bonds. Sulfur dioxygenase which converts DBT to DBT-sulfone (DBTO2 or DBT 5,5-dioxide) in a stepwise manner. Also acts on thioxanthen-9-one and 4,6-dimethyl DBT and 2,8-dimethyl DBT. This Rhodococcus erythropolis (Arthrobacter picolinophilus) protein is Dibenzothiophene monooxygenase.